We begin with the raw amino-acid sequence, 380 residues long: Glutamyl-tRNA reductase 1 (380 aa).

Substrate contacts are provided by residues threonine 42 to arginine 45, serine 93, glutamate 98 to aspartate 100, and glutamine 104. Cysteine 43 (nucleophile) is an active-site residue. Glycine 172–glycine 177 is an NADP(+) binding site.

It belongs to the glutamyl-tRNA reductase family. Homodimer.

It catalyses the reaction (S)-4-amino-5-oxopentanoate + tRNA(Glu) + NADP(+) = L-glutamyl-tRNA(Glu) + NADPH + H(+). The protein operates within porphyrin-containing compound metabolism; protoporphyrin-IX biosynthesis; 5-aminolevulinate from L-glutamyl-tRNA(Glu): step 1/2. Functionally, catalyzes the NADPH-dependent reduction of glutamyl-tRNA(Glu) to glutamate 1-semialdehyde (GSA). The chain is Glutamyl-tRNA reductase 1 from Pyrobaculum calidifontis (strain DSM 21063 / JCM 11548 / VA1).